The chain runs to 356 residues: Heat-inducible transcription repressor HrcA (356 aa).

It belongs to the HrcA family.

Functionally, negative regulator of class I heat shock genes (grpE-dnaK-dnaJ and groELS operons). Prevents heat-shock induction of these operons. The protein is Heat-inducible transcription repressor HrcA of Chlorobaculum tepidum (strain ATCC 49652 / DSM 12025 / NBRC 103806 / TLS) (Chlorobium tepidum).